The sequence spans 517 residues: MDFRTTCEETKTGVCLLQDGNQEPFKVRLHLARDLLMLQEQDVLCVSGEPFYSGERTVTIRRQTVGGFGLSIKGGAEHNIPVVISKISKEQRAELSGLLFIGDAILQINGINVRKCRHEEVVQVLRNAGEEVTLTVSFLKRAPAFLKLPVNEDCACAPSDQSSGTSSPLCDSGLHLNYHPNNTDTLSCSSWPTSPGLRWEKRWCDLRLIPLLHARFSQYVPGTDLSRQNESQVVAVDGVCSGILQCLSAEDCMDWLQAIASNISNLTKHNIKKINRNFPVNQQIVYMGWCEAREQESLQDRVYTPVFLALRGSCLYRFLSPPVTTWDWTRAEKTFSVCEIMCKVLKDSDLLDRRKHCFTMQSECGEDLYFSVELESDLAQWERAFQTATFLEVERIQCKTYACVLESHLMGLTIDFSTGFICFDAATKAVLWRYKFSQLKGSSDDGKSKIKFLFQNPDTKQIEAKELEFSNLFAVLHCIHSFFAAKVACLDPLFLGNQAATTAAVSSASTSKAKHLA.

The 84-residue stretch at 57 to 140 folds into the PDZ domain; the sequence is TVTIRRQTVG…EVTLTVSFLK (84 aa). Positions 283–390 constitute a PH domain; it reads QIVYMGWCEA…WERAFQTATF (108 aa).

Belongs to the syntrophin family. In terms of assembly, interacts with the dystrophin protein DMD and related proteins DTNA and DTNB. Interacts with DGKZ.

The protein localises to the cytoplasm. It is found in the cytoskeleton. The protein resides in the nucleus. In terms of biological role, adapter protein that binds to and probably organizes the subcellular localization of a variety of proteins. May link various receptors to the actin cytoskeleton and the dystrophin glycoprotein complex. May participate in regulating the subcellular location of diacylglycerol kinase-zeta to ensure that diacylglycerol is rapidly inactivated following receptor activation. The protein is Gamma-1-syntrophin (Sntg1) of Mus musculus (Mouse).